Here is a 669-residue protein sequence, read N- to C-terminus: Probable ferric reductase transmembrane component (669 aa).

The segment at 17–86 (FKTNGTEYAK…SGKGNSGTST (70 aa)) is disordered. 4 N-linked (GlcNAc...) asparagine glycosylation sites follow: N20, N52, N64, and N116. The segment covering 28-86 (TTKSSSGSKTSTSASKSSKSTGSSNASKSSTNAHGSNSSTSSTSSSSSKSGKGNSGTST) has biased composition (low complexity). The chain crosses the membrane as a helical span at residues 122–142 (GSGLLGYWAGILAIAIFANMI). An N-linked (GlcNAc...) asparagine glycan is attached at N152. The next 5 helical transmembrane spans lie at 198–218 (IIVVIFVVLTGLFSALHIHHV), 234–254 (LIADRTGILGTFLIPLLILFG), 281–301 (VDVLLIIVHAITFSVSDKATG), 313–333 (IWGTVSTICGGFILFQAMLFF), and 340–360 (VFFLIHIVLVVFFVVGGYYHL). The region spanning 239–373 (TGILGTFLIP…GYGDFMWAAI (135 aa)) is the Ferric oxidoreductase domain. Residues 374-492 (AVWAFDRVVR…EGPYGEPSSA (119 aa)) form the FAD-binding FR-type domain. 437–442 (HPFTFT) provides a ligand contact to FAD. Residues 499-519 (VVFVAGGNGIPGIYSECVDLA) form a helical membrane-spanning segment. N-linked (GlcNAc...) asparagine glycans are attached at residues N524 and N653.

The protein belongs to the ferric reductase (FRE) family. The cofactor is FAD.

It is found in the membrane. It carries out the reaction 2 a Fe(II)-siderophore + NAD(+) + H(+) = 2 a Fe(III)-siderophore + NADH. The polypeptide is Probable ferric reductase transmembrane component (CFL1) (Candida albicans (Yeast)).